We begin with the raw amino-acid sequence, 243 residues long: PHO85 cyclin-like protein psl1 (243 aa).

The segment covering 211–224 has biased composition (polar residues); that stretch reads ESPISHTPQQNQQD. Residues 211-231 are disordered; that stretch reads ESPISHTPQQNQQDEQPRRPI.

Belongs to the cyclin family. PHO80 subfamily. As to quaternary structure, forms a cyclin-CDK complex with pef1.

It localises to the cytoplasm. The protein localises to the nucleus. Functionally, cyclin partner of the cyclin-dependent kinase (CDK) pef1 (PHO85 homolog). The protein is PHO85 cyclin-like protein psl1 (psl1) of Schizosaccharomyces pombe (strain 972 / ATCC 24843) (Fission yeast).